Consider the following 370-residue polypeptide: Cytoplasmic envelopment protein 2 (370 aa).

Belongs to the herpesviridae cytoplasmic envelopment protein 2 family. As to quaternary structure, interacts with cytoplasmic envelopment protein 3 and with the capsid.

The protein localises to the virion tegument. It localises to the host cytoplasm. The protein resides in the host nucleus. In terms of biological role, plays a critical role in cytoplasmic virus egress. Participates in the final step of tegumentation and envelope acquisition within the host cytoplasm by directly interacting with the capsid. Upon virion binding to target cell, a signaling cascade is triggered to disrupt the interaction with the capsid, thereby preparing capsid uncoating. This chain is Cytoplasmic envelopment protein 2, found in Equine herpesvirus 1 (strain V592) (EHV-1).